The primary structure comprises 86 residues: Small ribosomal subunit protein bS16 (86 aa).

Belongs to the bacterial ribosomal protein bS16 family.

The chain is Small ribosomal subunit protein bS16 from Bordetella avium (strain 197N).